We begin with the raw amino-acid sequence, 500 residues long: Nuclear distribution protein PAC1 (500 aa).

7 WD repeats span residues 125–164 (HNGHPVTAIDIHPFQPIMATASQDGTIVIWNLLNLTEPQQ), 169–219 (AHTR…NLKA), 225–265 (GHEN…IVLS), 268–310 (GHSN…LMIG), 338–378 (QNEL…IRSD), 397–436 (EHKSWVKDIAIHPNSRFIISVGDDRKINIWDLGLLLESNL), and 459–500 (IKDQ…EYIL).

The protein belongs to the WD repeat LIS1/nudF family. Self-associates. Interacts with NDL1 and dynein.

The protein resides in the cytoplasm. Its subcellular location is the cytoskeleton. The protein localises to the spindle pole. In terms of biological role, positively regulates the activity of the minus-end directed microtubule motor protein dynein. Plays a central role in positioning the mitotic spindle at the bud neck during cell division. Targets cytoplasmic dynein to microtubule plus ends, thereby promoting dynein-mediated microtubule sliding along the bud cortex and consequently the movement of the mitotic spindle to the bud neck. In Komagataella phaffii (strain GS115 / ATCC 20864) (Yeast), this protein is Nuclear distribution protein PAC1.